Here is a 304-residue protein sequence, read N- to C-terminus: MMKQRTIAAPVKTVGIGLHSGRKVTIVIKPAPINSGVQFVRIDTPEQSVVPATALAVCDTRLASVIQKDGVRVSTVEHLLSACAGLGLDNLLIELDGEEVPIMDGSAASFLFLIESAGIAEQEAPRQFVVIKKAVEVREGDKLARLEPFFGFKLDFTIDFKHPAVDKTGQRFIVDFAEHAYRSEIGRARTFGFAHEVEALREMGLARGGSLDNAIVLDEHRILNNEELRYEDEFVRHKILDAIGDLYLIGHPIVGAYIAEKSGHALNNALLRKLLDDPSTYEISSFAENKAPAAYSQENQPLFF.

Zn(2+) is bound by residues His-78, His-237, and Asp-241. The active-site Proton donor is His-264.

Belongs to the LpxC family. Zn(2+) is required as a cofactor.

The catalysed reaction is a UDP-3-O-[(3R)-3-hydroxyacyl]-N-acetyl-alpha-D-glucosamine + H2O = a UDP-3-O-[(3R)-3-hydroxyacyl]-alpha-D-glucosamine + acetate. It participates in glycolipid biosynthesis; lipid IV(A) biosynthesis; lipid IV(A) from (3R)-3-hydroxytetradecanoyl-[acyl-carrier-protein] and UDP-N-acetyl-alpha-D-glucosamine: step 2/6. In terms of biological role, catalyzes the hydrolysis of UDP-3-O-myristoyl-N-acetylglucosamine to form UDP-3-O-myristoylglucosamine and acetate, the committed step in lipid A biosynthesis. The polypeptide is UDP-3-O-acyl-N-acetylglucosamine deacetylase (Polynucleobacter asymbioticus (strain DSM 18221 / CIP 109841 / QLW-P1DMWA-1) (Polynucleobacter necessarius subsp. asymbioticus)).